Consider the following 371-residue polypeptide: MGNYRIAVLPGDGIGKEVTSGAVEVLKAVGIRFGHEFTFEYGLIGGAAIDEAGTPLPEETLRLCRESDAVLLGAVGGPKWDDNPPHLRPEKGLLAIRKQLDLYANLRPVVCYDSLVSASPLKPDLVQGVDFVIVRELTGGIYFGQPSGRVVENGEEKAVDTLLYKKEEIERIVRMAFILARGRKKKVTSVDKANVLSSSRLWREVAEEVAKQFPDVTLEHMLVDNAAMQLIRAPKQFDVIVTENMFGDILSDEASMLSGSLGMLPSASLSASGPSLYEPVHGSAPDIAGMNKANPIAAILSAAMMLRLSFGLTAEAEAVEHAVRQALDQGLRTADLAPSGGRIVSTNEMVEEIKTAVLDYTAIAQIMTVYA.

NAD(+) is bound at residue G77–E90. Substrate contacts are provided by R97, R107, R135, and D224. 3 residues coordinate Mg(2+): D224, D248, and D252. G282–N294 lines the NAD(+) pocket.

It belongs to the isocitrate and isopropylmalate dehydrogenases family. LeuB type 1 subfamily. Homodimer. Mg(2+) serves as cofactor. The cofactor is Mn(2+).

The protein resides in the cytoplasm. The catalysed reaction is (2R,3S)-3-isopropylmalate + NAD(+) = 4-methyl-2-oxopentanoate + CO2 + NADH. It participates in amino-acid biosynthesis; L-leucine biosynthesis; L-leucine from 3-methyl-2-oxobutanoate: step 3/4. Catalyzes the oxidation of 3-carboxy-2-hydroxy-4-methylpentanoate (3-isopropylmalate) to 3-carboxy-4-methyl-2-oxopentanoate. The product decarboxylates to 4-methyl-2 oxopentanoate. The chain is 3-isopropylmalate dehydrogenase from Geobacillus kaustophilus (strain HTA426).